Here is a 424-residue protein sequence, read N- to C-terminus: Serine--tRNA ligase (424 aa).

An L-serine-binding site is contributed by 232-234 (TAE). 263-265 (RQE) contacts ATP. An L-serine-binding site is contributed by Glu286. 350–353 (EIGS) serves as a coordination point for ATP. Ser386 is a binding site for L-serine.

This sequence belongs to the class-II aminoacyl-tRNA synthetase family. Type-1 seryl-tRNA synthetase subfamily. As to quaternary structure, homodimer. The tRNA molecule binds across the dimer.

It localises to the cytoplasm. The enzyme catalyses tRNA(Ser) + L-serine + ATP = L-seryl-tRNA(Ser) + AMP + diphosphate + H(+). It catalyses the reaction tRNA(Sec) + L-serine + ATP = L-seryl-tRNA(Sec) + AMP + diphosphate + H(+). It functions in the pathway aminoacyl-tRNA biosynthesis; selenocysteinyl-tRNA(Sec) biosynthesis; L-seryl-tRNA(Sec) from L-serine and tRNA(Sec): step 1/1. Functionally, catalyzes the attachment of serine to tRNA(Ser). Is also able to aminoacylate tRNA(Sec) with serine, to form the misacylated tRNA L-seryl-tRNA(Sec), which will be further converted into selenocysteinyl-tRNA(Sec). The sequence is that of Serine--tRNA ligase from Onion yellows phytoplasma (strain OY-M).